The chain runs to 319 residues: Acetyl-coenzyme A carboxylase carboxyl transferase subunit alpha (319 aa).

The region spanning 35–296 (DLEKEIKQLE…KQRLLEQLKE (262 aa)) is the CoA carboxyltransferase C-terminal domain.

It belongs to the AccA family. As to quaternary structure, acetyl-CoA carboxylase is a heterohexamer composed of biotin carboxyl carrier protein (AccB), biotin carboxylase (AccC) and two subunits each of ACCase subunit alpha (AccA) and ACCase subunit beta (AccD).

The protein localises to the cytoplasm. The enzyme catalyses N(6)-carboxybiotinyl-L-lysyl-[protein] + acetyl-CoA = N(6)-biotinyl-L-lysyl-[protein] + malonyl-CoA. It functions in the pathway lipid metabolism; malonyl-CoA biosynthesis; malonyl-CoA from acetyl-CoA: step 1/1. Functionally, component of the acetyl coenzyme A carboxylase (ACC) complex. First, biotin carboxylase catalyzes the carboxylation of biotin on its carrier protein (BCCP) and then the CO(2) group is transferred by the carboxyltransferase to acetyl-CoA to form malonyl-CoA. This Aliivibrio fischeri (strain MJ11) (Vibrio fischeri) protein is Acetyl-coenzyme A carboxylase carboxyl transferase subunit alpha.